The following is a 329-amino-acid chain: DNA repair protein RAD51 homolog 4 (329 aa).

The preferentially binds ssDNA stretch occupies residues 1 to 83 (MGMLRAGLCP…ELKTSTAILS (83 aa)). Residues 4-77 (LRAGLCPGLT…GADLYEELKT (74 aa)) are interaction with XRCC2. The tract at residues 77–328 (TSTAILSTGI…EQSPELPGKQ (252 aa)) is interaction with RAD51C. 107–114 (GGPGSGKT) serves as a coordination point for ATP.

Belongs to the RecA family. RAD51 subfamily. Part of the BCDX2 complex consisting of RAD51B, RAD51C, RAD51D and XRCC2; the complex has a ring-like structure arranged into a flat disc around a central channel. In the absence of DNA, the BCDX2 subcomplex XRCC2:RAD51D formed a multimeric ring structure; in the presence of single-stranded DNA it formed a filamentous structure with the ssDNA. Interacts with SWSAP1 and ZSWIM7; involved in homologous recombination repair. Interacts with BLM; required for stimulation of BLM activity by the BCDX2 subcomplex XRCC2:RAD51D. Highly expressed in brain followed by testis. Also expressed in heart, liver, kidney, spleen, lung and skeletal muscle.

The protein localises to the nucleus. It localises to the chromosome. Its subcellular location is the telomere. Functionally, involved in the homologous recombination repair (HRR) pathway of double-stranded DNA breaks arising during DNA replication or induced by DNA-damaging agents. Bind to single-stranded DNA (ssDNA) and has DNA-dependent ATPase activity. Part of the RAD51 paralog protein complex BCDX2 which acts in the BRCA1-BRCA2-dependent HR pathway. Upon DNA damage, BCDX2 acts downstream of BRCA2 recruitment and upstream of RAD51 recruitment. BCDX2 binds predominantly to the intersection of the four duplex arms of the Holliday junction and to junction of replication forks. The BCDX2 complex was originally reported to bind single-stranded DNA, single-stranded gaps in duplex DNA and specifically to nicks in duplex DNA. Involved in telomere maintenance. The BCDX2 subcomplex XRCC2:RAD51D can stimulate Holliday junction resolution by BLM. In Mus musculus (Mouse), this protein is DNA repair protein RAD51 homolog 4 (Rad51d).